A 101-amino-acid chain; its full sequence is Protein SPIRAL1-like 3 (101 aa).

Residues 1 to 22 show a composition bias toward gly residues; that stretch reads MGRGVSSGGGQSSLGYLFGGGE. 2 disordered regions span residues 1–54 and 73–101; these read MGRG…GIQS and TDRP…KDGK.

The protein belongs to the SPIRAL1 family.

Acts in maintaining the cortical microtubules organization essential for anisotropic cell growth. The polypeptide is Protein SPIRAL1-like 3 (Oryza sativa subsp. japonica (Rice)).